A 460-amino-acid chain; its full sequence is Argininosuccinate lyase (460 aa).

This sequence belongs to the lyase 1 family. Argininosuccinate lyase subfamily.

The protein localises to the cytoplasm. It catalyses the reaction 2-(N(omega)-L-arginino)succinate = fumarate + L-arginine. Its pathway is amino-acid biosynthesis; L-arginine biosynthesis; L-arginine from L-ornithine and carbamoyl phosphate: step 3/3. The chain is Argininosuccinate lyase from Staphylococcus haemolyticus (strain JCSC1435).